Reading from the N-terminus, the 354-residue chain is Methylthioribose-1-phosphate isomerase (354 aa).

Residues Arg-45 to Ala-47, Arg-87, and Gln-204 each bind substrate. Asp-245 functions as the Proton donor in the catalytic mechanism. Asn-255–Lys-256 serves as a coordination point for substrate.

It belongs to the eIF-2B alpha/beta/delta subunits family. MtnA subfamily.

It carries out the reaction 5-(methylsulfanyl)-alpha-D-ribose 1-phosphate = 5-(methylsulfanyl)-D-ribulose 1-phosphate. It participates in amino-acid biosynthesis; L-methionine biosynthesis via salvage pathway; L-methionine from S-methyl-5-thio-alpha-D-ribose 1-phosphate: step 1/6. Its function is as follows. Catalyzes the interconversion of methylthioribose-1-phosphate (MTR-1-P) into methylthioribulose-1-phosphate (MTRu-1-P). The protein is Methylthioribose-1-phosphate isomerase of Chlorobaculum tepidum (strain ATCC 49652 / DSM 12025 / NBRC 103806 / TLS) (Chlorobium tepidum).